The primary structure comprises 1944 residues: uncharacterized protein (1944 aa).

A disordered region spans residues 908–999; it reads SQNLNFLKSK…SESEEESSNG (92 aa). Basic and acidic residues-rich tracts occupy residues 916–929 and 939–949; these read SKQETTQRIRESAK and LSEKLNSDNHI. A compositionally biased stretch (acidic residues) spans 985–996; the sequence is SDEDTSESEEES. ATP is bound at residue 1293–1300; sequence GPPGTGKT. The disordered stretch occupies residues 1824–1944; sequence QEAHKVKKRH…PPKVEHFKRK (121 aa). Composition is skewed to basic and acidic residues over residues 1843-1852 and 1869-1891; these read GTERDEDIPN and KVTKPRLDESSSSKQDVLNKIDE. Positions 1912 to 1922 are enriched in basic residues; it reads GHMKKSKKPKS.

The protein belongs to the DNA2/NAM7 helicase family.

The protein localises to the nucleus. This is an uncharacterized protein from Schizosaccharomyces pombe (strain 972 / ATCC 24843) (Fission yeast).